Reading from the N-terminus, the 151-residue chain is Large ribosomal subunit protein uL13 (151 aa).

This sequence belongs to the universal ribosomal protein uL13 family. Part of the 50S ribosomal subunit.

In terms of biological role, this protein is one of the early assembly proteins of the 50S ribosomal subunit, although it is not seen to bind rRNA by itself. It is important during the early stages of 50S assembly. In Synechococcus elongatus (strain ATCC 33912 / PCC 7942 / FACHB-805) (Anacystis nidulans R2), this protein is Large ribosomal subunit protein uL13.